A 182-amino-acid chain; its full sequence is Signal peptidase I (182 aa).

The Cytoplasmic segment spans residues 1–13 (MTKQKEKRGRRWP). The helical transmembrane segment at 14–30 (WFVAVCVVATLRLFVFS) threads the bilayer. Over 31–182 (NYVVEGKSMM…WPFKQFAFQF (152 aa)) the chain is Extracellular. Residues S38 and K79 contribute to the active site.

Belongs to the peptidase S26 family.

The protein localises to the cell membrane. It carries out the reaction Cleavage of hydrophobic, N-terminal signal or leader sequences from secreted and periplasmic proteins.. The chain is Signal peptidase I (lepB) from Bacillus caldolyticus.